A 384-amino-acid polypeptide reads, in one-letter code: Urotensin-2 receptor (384 aa).

The Extracellular portion of the chain corresponds to 1 to 54; that stretch reads MALSPEPSSRFLVPATMGSAMPELPGAPNASLNSSLASPTEPNSLEDLVATGTI. Residues Asn-29 and Asn-33 are each glycosylated (N-linked (GlcNAc...) asparagine). A helical membrane pass occupies residues 55-77; sequence GVVLSAMGVVGMAGNVYTLTVMC. The Cytoplasmic segment spans residues 78 to 87; it reads RFLHTSASMY. A helical membrane pass occupies residues 88–113; that stretch reads VYVINLALADLLYLLSIPFIVATYVT. Residues 114–124 lie on the Extracellular side of the membrane; the sequence is KRWHFGDVGCR. The cysteines at positions 123 and 199 are disulfide-linked. Residues 125-146 form a helical membrane-spanning segment; sequence VLFSLDFLTMHASIFTLTLMSR. Residues 147 to 167 are Cytoplasmic-facing; sequence ERYAAVVRPLDTVQRSKGYRK. Residues 168–186 form a helical membrane-spanning segment; sequence VLALGTWLLALLLALPMML. At 187-209 the chain is on the extracellular side; the sequence is AIRLVRRGHKSLCLPAWGQRTHR. The chain crosses the membrane as a helical span at residues 210–232; that stretch reads AYLTLLFGTSIVGPGVVIGLLYV. Residues 233–259 are Cytoplasmic-facing; it reads RLARAYWLSQRSSFTQTRRLPNPRVLY. Residues 260 to 285 form a helical membrane-spanning segment; that stretch reads LILGIVLLFWACFLPFWLWQLLAQYR. Over 286 to 299 the chain is Extracellular; it reads GAPPLAPRSARIVN. A helical membrane pass occupies residues 300–320; that stretch reads YLTTCLTYGNSCVNPFLYTLL. Residues 321–384 lie on the Cytoplasmic side of the membrane; that stretch reads TKNYRDYRQR…SQAVPGSLCV (64 aa).

This sequence belongs to the G-protein coupled receptor 1 family. In terms of tissue distribution, expressed in neural tissue, including sensory epithelia.

The protein resides in the cell membrane. Its function is as follows. High affinity receptor for urotensin-2 and urotensin-2B. The activity of this receptor is mediated by a G-protein that activate a phosphatidylinositol-calcium second messenger system. The chain is Urotensin-2 receptor (UTS2R) from Bos taurus (Bovine).